The following is a 681-amino-acid chain: UvrABC system protein B (681 aa).

In terms of domain architecture, Helicase ATP-binding spans 32–419; sequence ARLSRGERDV…GGEYVEQVIR (388 aa). 45–52 is a binding site for ATP; that stretch reads GATGTGKS. A Beta-hairpin motif is present at residues 98–121; it reads YYDYYQPEAYIAQTDTYIEKDSSI. Positions 436-602 constitute a Helicase C-terminal domain; it reads QIDDLIHEIK…PLRKKIADIL (167 aa). Positions 607-616 are enriched in polar residues; that stretch reads ESKAESTAPS. The tract at residues 607-626 is disordered; that stretch reads ESKAESTAPSSDAVVVSKTN. The UVR domain maps to 636–671; the sequence is RSLIDDLTTQMGTAARELKFELAGRLRDEIAELKKE.

It belongs to the UvrB family. As to quaternary structure, forms a heterotetramer with UvrA during the search for lesions. Interacts with UvrC in an incision complex.

It localises to the cytoplasm. In terms of biological role, the UvrABC repair system catalyzes the recognition and processing of DNA lesions. A damage recognition complex composed of 2 UvrA and 2 UvrB subunits scans DNA for abnormalities. Upon binding of the UvrA(2)B(2) complex to a putative damaged site, the DNA wraps around one UvrB monomer. DNA wrap is dependent on ATP binding by UvrB and probably causes local melting of the DNA helix, facilitating insertion of UvrB beta-hairpin between the DNA strands. Then UvrB probes one DNA strand for the presence of a lesion. If a lesion is found the UvrA subunits dissociate and the UvrB-DNA preincision complex is formed. This complex is subsequently bound by UvrC and the second UvrB is released. If no lesion is found, the DNA wraps around the other UvrB subunit that will check the other stand for damage. In Corynebacterium diphtheriae (strain ATCC 700971 / NCTC 13129 / Biotype gravis), this protein is UvrABC system protein B.